The primary structure comprises 363 residues: Putative serine/threonine-protein kinase gskl-1 (363 aa).

The region spanning 20-304 is the Protein kinase domain; that stretch reads FGAHKLCGSG…AIDVLKMPLF (285 aa). Residues 26-34 and lysine 50 each bind ATP; that span reads CGSGRFSNV. Residue aspartate 146 is the Proton acceptor of the active site. The interval 311–363 is disordered; the sequence is PPKKRSNGVEMPNLASYTEMHHKREPETEVVADIQTTEKAEKESDSTNEELED. The span at 346 to 355 shows a compositional bias: basic and acidic residues; it reads TTEKAEKESD.

This sequence belongs to the protein kinase superfamily. Ser/Thr protein kinase family. Expressed during multiple stages of spermatogenesis, in males and hermaphrodites (at protein level).

The protein localises to the cytoplasm. The protein resides in the cell projection. It is found in the pseudopodium. It carries out the reaction L-seryl-[protein] + ATP = O-phospho-L-seryl-[protein] + ADP + H(+). It catalyses the reaction L-threonyl-[protein] + ATP = O-phospho-L-threonyl-[protein] + ADP + H(+). May be an autophosphorylating tyrosine kinase, a bifunctional (serine/tyrosine-specific) protein kinase, or a serine kinase that is a substrate for an associated tyrosine kinase. Acting in concert with putative serine/threonine-protein kinase gskl-2, required for sister chromatid segregation and spermatid budding during male meiosis. Plays a role in regulating female meiosis II, together with gskl-2. Involved in sperm pseudopod formation and function, together with gskl-2. The protein is Putative serine/threonine-protein kinase gskl-1 of Caenorhabditis elegans.